The primary structure comprises 179 residues: NADH:FAD oxidoreductase (179 aa).

FAD is bound at residue 48 to 51; it reads TCSA. NAD(+) is bound at residue 54–57; sequence SVCD. Residues 65–71, A99, 104–109, and S144 contribute to the FAD site; these read CINRKSY and VPMEER. Residues H145 and 166–169 contribute to the NAD(+) site; that span reads YHRR. Residue Y166 participates in FAD binding.

The protein belongs to the non-flavoprotein flavin reductase family. In terms of assembly, homodimer. The chlorophenol-4-monooxygenase is composed of an oxygenase component TftD and a reductase component TftC.

The catalysed reaction is FADH2 + NAD(+) = FAD + NADH + 2 H(+). The protein operates within xenobiotic degradation. Its function is as follows. Reductase component of a two-component system that degrades 2,4,5-trichlorophenol. TftC provides the FADH(2) required by TftD. TftD oxidizes 2,4,5-trichlorophenol (2,4,5-TCP) to 2,5-dichloro-p-benzoquinone, which is chemically reduced to 2,5-dichloro-p-hydroquinone (2,5-DiCHQ). Then, TftD oxidizes the latter to 5-chloro-2-hydroxy-p-benzoquinone. This Burkholderia cepacia (Pseudomonas cepacia) protein is NADH:FAD oxidoreductase (tftC).